The chain runs to 258 residues: Phosphoribosylformylglycinamidine synthase subunit PurQ (258 aa).

The Glutamine amidotransferase type-1 domain maps to 7 to 238 (IGILLMEGTN…QAMYLETEKD (232 aa)). Residue Cys97 is the Nucleophile of the active site. Active-site residues include His220 and Glu222.

In terms of assembly, part of the FGAM synthase complex composed of 1 PurL, 1 PurQ and 2 PurS subunits.

The protein localises to the cytoplasm. The enzyme catalyses N(2)-formyl-N(1)-(5-phospho-beta-D-ribosyl)glycinamide + L-glutamine + ATP + H2O = 2-formamido-N(1)-(5-O-phospho-beta-D-ribosyl)acetamidine + L-glutamate + ADP + phosphate + H(+). It catalyses the reaction L-glutamine + H2O = L-glutamate + NH4(+). It functions in the pathway purine metabolism; IMP biosynthesis via de novo pathway; 5-amino-1-(5-phospho-D-ribosyl)imidazole from N(2)-formyl-N(1)-(5-phospho-D-ribosyl)glycinamide: step 1/2. In terms of biological role, part of the phosphoribosylformylglycinamidine synthase complex involved in the purines biosynthetic pathway. Catalyzes the ATP-dependent conversion of formylglycinamide ribonucleotide (FGAR) and glutamine to yield formylglycinamidine ribonucleotide (FGAM) and glutamate. The FGAM synthase complex is composed of three subunits. PurQ produces an ammonia molecule by converting glutamine to glutamate. PurL transfers the ammonia molecule to FGAR to form FGAM in an ATP-dependent manner. PurS interacts with PurQ and PurL and is thought to assist in the transfer of the ammonia molecule from PurQ to PurL. This chain is Phosphoribosylformylglycinamidine synthase subunit PurQ, found in Thermoplasma volcanium (strain ATCC 51530 / DSM 4299 / JCM 9571 / NBRC 15438 / GSS1).